A 319-amino-acid polypeptide reads, in one-letter code: Mas-related G-protein coupled receptor member D (319 aa).

Over 1–30 (MNYTPYSSPAPGLTISPTMDPVTWVYFSVT) the chain is Extracellular. A helical membrane pass occupies residues 31 to 51 (FLAMATCVCGIVGNSMVIWLL). Over 52-64 (SFHRVQRSPFCTY) the chain is Cytoplasmic. A helical membrane pass occupies residues 65-85 (VLNLAVADLLFLLCMASLLSL). At 86–92 (ETGPLLT) the chain is on the extracellular side. A helical membrane pass occupies residues 93-113 (ASTSARVYEGMKRIKYFAYTA). The Cytoplasmic portion of the chain corresponds to 114-144 (GLSLLTAISTQRCLSVLFPIWYKCHRPQHLS). A helical transmembrane segment spans residues 145-165 (GVVCGVLWALALLMNFLASFF). The Extracellular segment spans residues 166-184 (CVQFWHPDKYQCFKVDMVF). A helical membrane pass occupies residues 185–205 (NSLILGIFMPVMVLTSAIIFI). Topologically, residues 206–220 (RMRKNSLLQRRQPRR) are cytoplasmic. The helical transmembrane segment at 221 to 241 (LYVVILTSVLVFLTCSLPLGI) threads the bilayer. Residues 242-260 (NWFLLYWVELPQAVRLLYV) lie on the Extracellular side of the membrane. The chain crosses the membrane as a helical span at residues 261–281 (CSSRFSSSLSSSANPVIYFLV). Residues 282-319 (GSQKSHRLQESLGAVLGRALQDEPEGRETPSTCTNDGV) are Cytoplasmic-facing.

This sequence belongs to the G-protein coupled receptor 1 family. Mas subfamily. Co-expressed in the small diameter neurons with P2X3 and VR1 in dorsal root ganglia.

The protein resides in the cell membrane. Its function is as follows. May regulate nociceptor function and/or development, including the sensation or modulation of pain. Functions as a specific membrane receptor for beta-alanine. The receptor couples with G-protein G(q) and G(i). The polypeptide is Mas-related G-protein coupled receptor member D (Mrgprd) (Rattus norvegicus (Rat)).